A 99-amino-acid polypeptide reads, in one-letter code: Beta-2-microglobulin (99 aa).

The region spanning 5–93 (PRVQVYSRHP…HITLSEPKIV (89 aa)) is the Ig-like C1-type domain. Residues Cys-25 and Cys-80 are joined by a disulfide bond.

Belongs to the beta-2-microglobulin family. Heterodimer of an alpha chain and a beta chain. Beta-2-microglobulin is the beta-chain of major histocompatibility complex class I molecules.

It is found in the secreted. Its function is as follows. Component of the class I major histocompatibility complex (MHC). Involved in the presentation of peptide antigens to the immune system. This is Beta-2-microglobulin (B2M) from Cavia porcellus (Guinea pig).